The chain runs to 257 residues: Ribosome-recycling factor, mitochondrial (257 aa).

Belongs to the RRF family.

Its subcellular location is the mitochondrion. Its function is as follows. Necessary for protein synthesis in mitochondria. Functions as a ribosome recycling factor in mitochondria. In Debaryomyces hansenii (strain ATCC 36239 / CBS 767 / BCRC 21394 / JCM 1990 / NBRC 0083 / IGC 2968) (Yeast), this protein is Ribosome-recycling factor, mitochondrial (RRF1).